The chain runs to 282 residues: Glycine betaine/carnitine transport permease protein GbuB (282 aa).

Transmembrane regions (helical) follow at residues 44–64, 70–90, 99–119, 140–160, 220–240, and 251–271; these read VFDLVPPWLFIILLVFGTFWV, KWGLIIFEVVGLLLIWNLDFW, LVLTSSLIALVIGVPLGIWMA, AFVYLIPAVAFFGIGMVPGVV, IMLALSMVVIASMIGAMGLGT, and AGGGFVAGIAIVIVAIILDRL. Positions 93-272 constitute an ABC transmembrane type-1 domain; it reads MTQTLTLVLT…IVAIILDRLT (180 aa).

This sequence belongs to the binding-protein-dependent transport system permease family. In terms of assembly, the complex is composed of two ATP-binding proteins (GbuA), two transmembrane proteins (GbuB) and a solute-binding protein (GbuC).

The protein localises to the cell membrane. Its activity is regulated as follows. The complex is activated by an osmotic gradient or by low temperature. Part of the ABC transporter complex GbuABC involved in glycine betaine uptake. Responsible for the translocation of the substrate across the membrane. Involved, with BetL and OpuC, in osmoprotection and cryoprotection of Listeria. Can also uptake carnitine when carnitine is abundant in the growth medium. This Listeria monocytogenes serotype 1/2a (strain 10403S) protein is Glycine betaine/carnitine transport permease protein GbuB (gbuB).